A 261-amino-acid polypeptide reads, in one-letter code: Glucosamine-6-phosphate deaminase (261 aa).

Asp-67 (proton acceptor; for enolization step) is an active-site residue. Catalysis depends on Asp-136, which acts as the For ring-opening step. His-138 functions as the Proton acceptor; for ring-opening step in the catalytic mechanism. The For ring-opening step role is filled by Glu-143.

It belongs to the glucosamine/galactosamine-6-phosphate isomerase family. NagB subfamily.

It carries out the reaction alpha-D-glucosamine 6-phosphate + H2O = beta-D-fructose 6-phosphate + NH4(+). Its pathway is amino-sugar metabolism; N-acetylneuraminate degradation; D-fructose 6-phosphate from N-acetylneuraminate: step 5/5. Catalyzes the reversible isomerization-deamination of glucosamine 6-phosphate (GlcN6P) to form fructose 6-phosphate (Fru6P) and ammonium ion. This is Glucosamine-6-phosphate deaminase from Streptomyces coelicolor (strain ATCC BAA-471 / A3(2) / M145).